Reading from the N-terminus, the 414-residue chain is Serine hydroxymethyltransferase (414 aa).

(6S)-5,6,7,8-tetrahydrofolate-binding positions include leucine 121 and 125–127; that span reads GHL. Lysine 229 is subject to N6-(pyridoxal phosphate)lysine.

The protein belongs to the SHMT family. As to quaternary structure, homodimer. Pyridoxal 5'-phosphate serves as cofactor.

It localises to the cytoplasm. It carries out the reaction (6R)-5,10-methylene-5,6,7,8-tetrahydrofolate + glycine + H2O = (6S)-5,6,7,8-tetrahydrofolate + L-serine. It participates in one-carbon metabolism; tetrahydrofolate interconversion. The protein operates within amino-acid biosynthesis; glycine biosynthesis; glycine from L-serine: step 1/1. Functionally, catalyzes the reversible interconversion of serine and glycine with tetrahydrofolate (THF) serving as the one-carbon carrier. This reaction serves as the major source of one-carbon groups required for the biosynthesis of purines, thymidylate, methionine, and other important biomolecules. Also exhibits THF-independent aldolase activity toward beta-hydroxyamino acids, producing glycine and aldehydes, via a retro-aldol mechanism. This chain is Serine hydroxymethyltransferase, found in Thiobacillus denitrificans (strain ATCC 25259 / T1).